The chain runs to 419 residues: ATP-dependent RNA helicase RhlB (419 aa).

A Q motif motif is present at residues 9 to 37 (QRFSDLALHRIVQQAIKEKGFEFCTPIQA). The region spanning 40 to 217 (LPITLKGQDI…FEHMNDPQYV (178 aa)) is the Helicase ATP-binding domain. 53–60 (AQTGTGKT) serves as a coordination point for ATP. The DEAD box signature appears at 163 to 166 (DEAD). The Helicase C-terminal domain occupies 241–388 (KMALLMTLLE…VSQYDAKALI (148 aa)).

This sequence belongs to the DEAD box helicase family. RhlB subfamily. In terms of assembly, component of the RNA degradosome, which is a multiprotein complex involved in RNA processing and mRNA degradation.

It is found in the cytoplasm. It carries out the reaction ATP + H2O = ADP + phosphate + H(+). DEAD-box RNA helicase involved in RNA degradation. Has RNA-dependent ATPase activity and unwinds double-stranded RNA. The polypeptide is ATP-dependent RNA helicase RhlB (Histophilus somni (strain 2336) (Haemophilus somnus)).